A 280-amino-acid chain; its full sequence is 4-diphosphocytidyl-2-C-methyl-D-erythritol kinase (280 aa).

Residue lysine 9 is part of the active site. Residue proline 92–serine 102 coordinates ATP. Aspartate 134 is a catalytic residue.

Belongs to the GHMP kinase family. IspE subfamily.

It carries out the reaction 4-CDP-2-C-methyl-D-erythritol + ATP = 4-CDP-2-C-methyl-D-erythritol 2-phosphate + ADP + H(+). It participates in isoprenoid biosynthesis; isopentenyl diphosphate biosynthesis via DXP pathway; isopentenyl diphosphate from 1-deoxy-D-xylulose 5-phosphate: step 3/6. In terms of biological role, catalyzes the phosphorylation of the position 2 hydroxy group of 4-diphosphocytidyl-2C-methyl-D-erythritol. The protein is 4-diphosphocytidyl-2-C-methyl-D-erythritol kinase of Nitrosococcus oceani (strain ATCC 19707 / BCRC 17464 / JCM 30415 / NCIMB 11848 / C-107).